Reading from the N-terminus, the 110-residue chain is Large ribosomal subunit protein uL22 (110 aa).

The protein belongs to the universal ribosomal protein uL22 family. In terms of assembly, part of the 50S ribosomal subunit.

Functionally, this protein binds specifically to 23S rRNA; its binding is stimulated by other ribosomal proteins, e.g. L4, L17, and L20. It is important during the early stages of 50S assembly. It makes multiple contacts with different domains of the 23S rRNA in the assembled 50S subunit and ribosome. In terms of biological role, the globular domain of the protein is located near the polypeptide exit tunnel on the outside of the subunit, while an extended beta-hairpin is found that lines the wall of the exit tunnel in the center of the 70S ribosome. This Nitrosococcus oceani (strain ATCC 19707 / BCRC 17464 / JCM 30415 / NCIMB 11848 / C-107) protein is Large ribosomal subunit protein uL22.